The chain runs to 635 residues: Nuclear distribution protein nudE homolog 1 (635 aa).

Residues 14-192 (EKEIKHWKSK…TILRDLVTRS (179 aa)) adopt a coiled-coil conformation. 5 disordered regions span residues 35–63 (ESSL…NKTI), 200–267 (TMAS…LSRD), 279–328 (VLDD…SARA), 389–504 (SRVV…DHDP), and 516–635 (AAQA…TETF). Residues 43 to 56 (ESSKELEQEMEKEL) show a composition bias toward basic and acidic residues. Polar residues-rich tracts occupy residues 201-224 (MASS…SPIK) and 237-246 (SRQALSSPVT). A compositionally biased stretch (low complexity) spans 280–299 (LDDSPTATTTSAAPTRSSTL). 2 stretches are compositionally biased toward polar residues: residues 314-326 (ASTS…SPSA) and 411-428 (GSPS…TSTP). Over residues 516 to 541 (AAQASVAKRRTSMSGSGMSHSASHGS) the composition is skewed to low complexity. Polar residues-rich tracts occupy residues 547–571 (SGST…SSMT) and 580–619 (SKRT…PAQT). The span at 620 to 635 (LSRSRSSSLGSETETF) shows a compositional bias: low complexity.

Belongs to the nudE family. Self-associates. Interacts with PAC1.

The protein resides in the cytoplasm. The protein localises to the cytoskeleton. Its function is as follows. Required for nuclear migration. This Mycosarcoma maydis (Corn smut fungus) protein is Nuclear distribution protein nudE homolog 1 (NDE1).